Here is a 118-residue protein sequence, read N- to C-terminus: UPF0102 protein lpg2994 (118 aa).

Belongs to the UPF0102 family.

This Legionella pneumophila subsp. pneumophila (strain Philadelphia 1 / ATCC 33152 / DSM 7513) protein is UPF0102 protein lpg2994.